A 90-amino-acid chain; its full sequence is Protein RALF-like 29 (90 aa).

A signal peptide spans 1-25 (MIKTKEVTFVTILIVLCVFISTIHA). Intrachain disulfides connect Cys-41–Cys-50 and Cys-63–Cys-69.

This sequence belongs to the plant rapid alkalinization factor (RALF) family.

It localises to the secreted. Cell signaling peptide that may regulate plant stress, growth, and development. Mediates a rapid alkalinization of extracellular space by mediating a transient increase in the cytoplasmic Ca(2+) concentration leading to a calcium-dependent signaling events through a cell surface receptor and a concomitant activation of some intracellular mitogen-activated protein kinases. This is Protein RALF-like 29 (RALFL29) from Arabidopsis thaliana (Mouse-ear cress).